Reading from the N-terminus, the 346-residue chain is Probable alpha-1,2-galactosyltransferase gmh2 (346 aa).

Residues 1–11 (MALMLSRIPRR) lie on the Cytoplasmic side of the membrane. A helical; Signal-anchor for type II membrane protein transmembrane segment spans residues 12 to 32 (FFFLFLTVGLIAGAFLYSLIY). The Lumenal portion of the chain corresponds to 33–346 (FVDVDLVSKV…LWQKFYALID (314 aa)). Residues Asn64, Asn142, and Asn224 are each glycosylated (N-linked (GlcNAc...) asparagine).

This sequence belongs to the glycosyltransferase 34 family.

It is found in the golgi apparatus membrane. The chain is Probable alpha-1,2-galactosyltransferase gmh2 (gmh2) from Schizosaccharomyces pombe (strain 972 / ATCC 24843) (Fission yeast).